We begin with the raw amino-acid sequence, 486 residues long: Cysteine--tRNA ligase (486 aa).

Cysteine 29 is a binding site for Zn(2+). The 'HIGH' region motif lies at 31 to 41 (VTVYDYCHLGH). Cysteine 214, histidine 239, and glutamate 243 together coordinate Zn(2+). Residues 271–275 (KMSKS) carry the 'KMSKS' region motif. Lysine 274 contacts ATP.

This sequence belongs to the class-I aminoacyl-tRNA synthetase family. As to quaternary structure, monomer. Zn(2+) is required as a cofactor.

Its subcellular location is the cytoplasm. It carries out the reaction tRNA(Cys) + L-cysteine + ATP = L-cysteinyl-tRNA(Cys) + AMP + diphosphate. This is Cysteine--tRNA ligase from Trichormus variabilis (strain ATCC 29413 / PCC 7937) (Anabaena variabilis).